We begin with the raw amino-acid sequence, 420 residues long: Glutamyl-tRNA reductase (420 aa).

Substrate is bound by residues 49–52, serine 109, 114–116, and glutamine 120; these read TCNR and EPQ. Residue cysteine 50 is the Nucleophile of the active site. Position 189 to 194 (189 to 194) interacts with NADP(+); that stretch reads GAGETI.

It belongs to the glutamyl-tRNA reductase family. In terms of assembly, homodimer.

The catalysed reaction is (S)-4-amino-5-oxopentanoate + tRNA(Glu) + NADP(+) = L-glutamyl-tRNA(Glu) + NADPH + H(+). It participates in porphyrin-containing compound metabolism; protoporphyrin-IX biosynthesis; 5-aminolevulinate from L-glutamyl-tRNA(Glu): step 1/2. Functionally, catalyzes the NADPH-dependent reduction of glutamyl-tRNA(Glu) to glutamate 1-semialdehyde (GSA). The polypeptide is Glutamyl-tRNA reductase (Yersinia enterocolitica serotype O:8 / biotype 1B (strain NCTC 13174 / 8081)).